Consider the following 167-residue polypeptide: NADH-quinone oxidoreductase subunit B (167 aa).

[4Fe-4S] cluster-binding residues include cysteine 40, cysteine 41, cysteine 105, and cysteine 134.

This sequence belongs to the complex I 20 kDa subunit family. In terms of assembly, NDH-1 is composed of 14 different subunits. Subunits NuoB, C, D, E, F, and G constitute the peripheral sector of the complex. [4Fe-4S] cluster serves as cofactor.

The protein localises to the cell inner membrane. The enzyme catalyses a quinone + NADH + 5 H(+)(in) = a quinol + NAD(+) + 4 H(+)(out). NDH-1 shuttles electrons from NADH, via FMN and iron-sulfur (Fe-S) centers, to quinones in the respiratory chain. The immediate electron acceptor for the enzyme in this species is believed to be ubiquinone. Couples the redox reaction to proton translocation (for every two electrons transferred, four hydrogen ions are translocated across the cytoplasmic membrane), and thus conserves the redox energy in a proton gradient. This Campylobacter jejuni subsp. jejuni serotype O:6 (strain 81116 / NCTC 11828) protein is NADH-quinone oxidoreductase subunit B.